The primary structure comprises 64 residues: Conotoxin VnMRCL-04 (64 aa).

The N-terminal stretch at 1 to 22 is a signal peptide; that stretch reads MRCLPVFVILLLLIASAPSVDA. The propeptide occupies 23–48; the sequence is RPKTKDDVPLASFHGNAERTLLNILR. At tryptophan 63 the chain carries Tryptophan amide.

This sequence belongs to the conotoxin T superfamily. Post-translationally, contains 2 disulfide bonds that can be either 'C1-C3, C2-C4' or 'C1-C4, C2-C3', since these disulfide connectivities have been observed for conotoxins with cysteine framework V (for examples, see AC P0DQQ7 and AC P81755). As to expression, expressed by the venom duct.

Its subcellular location is the secreted. The polypeptide is Conotoxin VnMRCL-04 (Conus ventricosus (Mediterranean cone)).